The following is an 84-amino-acid chain: Small ribosomal subunit protein uS17 (84 aa).

Belongs to the universal ribosomal protein uS17 family. As to quaternary structure, part of the 30S ribosomal subunit.

One of the primary rRNA binding proteins, it binds specifically to the 5'-end of 16S ribosomal RNA. This Clostridium botulinum (strain Alaska E43 / Type E3) protein is Small ribosomal subunit protein uS17.